Reading from the N-terminus, the 1176-residue chain is Pesticidal crystal protein Cry1Aa (1176 aa).

Belongs to the delta endotoxin family.

Functionally, promotes colloidosmotic lysis by binding to the midgut epithelial cells of many lepidopteran larvae. In Bacillus thuringiensis subsp. aizawai, this protein is Pesticidal crystal protein Cry1Aa (cry1Aa).